Here is a 439-residue protein sequence, read N- to C-terminus: Adenylosuccinate synthetase (439 aa).

GTP is bound by residues 12-18 (GDEGKGK) and 40-42 (GHT). The active-site Proton acceptor is the aspartate 13. Residues aspartate 13 and glycine 40 each contribute to the Mg(2+) site. IMP-binding positions include 13 to 16 (DEGK), 38 to 41 (NAGH), threonine 137, arginine 151, glutamine 232, threonine 247, and arginine 311. Histidine 41 acts as the Proton donor in catalysis. 307-313 (ATTGRPR) is a binding site for substrate. Residues arginine 313, 339–341 (KLD), and 421–423 (SNG) each bind GTP.

The protein belongs to the adenylosuccinate synthetase family. As to quaternary structure, homodimer. Requires Mg(2+) as cofactor.

It localises to the cytoplasm. The enzyme catalyses IMP + L-aspartate + GTP = N(6)-(1,2-dicarboxyethyl)-AMP + GDP + phosphate + 2 H(+). It functions in the pathway purine metabolism; AMP biosynthesis via de novo pathway; AMP from IMP: step 1/2. Functionally, plays an important role in the de novo pathway of purine nucleotide biosynthesis. Catalyzes the first committed step in the biosynthesis of AMP from IMP. This Salinibacter ruber (strain DSM 13855 / M31) protein is Adenylosuccinate synthetase.